The following is a 75-amino-acid chain: U-stichotoxin-Hau3a (75 aa).

The first 19 residues, 1–19 (MNHLIILVVAAVFLGMASA), serve as a signal peptide directing secretion. Positions 20 to 26 (EDVFHKR) are excised as a propeptide. 3 disulfides stabilise this stretch: Cys31-Cys71, Cys33-Cys61, and Cys54-Cys72.

The protein belongs to the sea anemone sodium channel inhibitory toxin family. Type I subfamily. Contains 3 disulfide bonds.

Its subcellular location is the secreted. The protein resides in the nematocyst. Its function is as follows. Toxin that is lethal to crab. In Heteractis aurora (Banded sea anemone), this protein is U-stichotoxin-Hau3a.